The chain runs to 390 residues: Elongation factor Tu 2 (390 aa).

The 194-residue stretch at 10–203 folds into the tr-type G domain; sequence KPHLNIGTMG…AVDTYVPMPE (194 aa). Positions 19 to 26 are G1; that stretch reads GHVDHGKT. Position 19-26 (19-26) interacts with GTP; that stretch reads GHVDHGKT. T26 is a Mg(2+) binding site. Positions 60–64 are G2; it reads GITIN. The interval 81-84 is G3; the sequence is DMPG. Residues 81-85 and 136-139 contribute to the GTP site; these read DMPGH and NKAD. The segment at 136 to 139 is G4; the sequence is NKAD. Positions 173–175 are G5; sequence SGL.

This sequence belongs to the TRAFAC class translation factor GTPase superfamily. Classic translation factor GTPase family. EF-Tu/EF-1A subfamily. As to quaternary structure, monomer.

It localises to the cytoplasm. It carries out the reaction GTP + H2O = GDP + phosphate + H(+). In terms of biological role, GTP hydrolase that promotes the GTP-dependent binding of aminoacyl-tRNA to the A-site of ribosomes during protein biosynthesis. The polypeptide is Elongation factor Tu 2 (Streptomyces avermitilis (strain ATCC 31267 / DSM 46492 / JCM 5070 / NBRC 14893 / NCIMB 12804 / NRRL 8165 / MA-4680)).